The sequence spans 356 residues: tRNA (guanine(26)-N(2))-dimethyltransferase (356 aa).

In terms of domain architecture, Trm1 methyltransferase spans 5 to 352; the sequence is VLRREGTVEF…VSAGEVERVL (348 aa). Residues arginine 40, arginine 67, aspartate 85, aspartate 111, and alanine 112 each contribute to the S-adenosyl-L-methionine site.

Belongs to the class I-like SAM-binding methyltransferase superfamily. Trm1 family.

The enzyme catalyses guanosine(26) in tRNA + 2 S-adenosyl-L-methionine = N(2)-dimethylguanosine(26) in tRNA + 2 S-adenosyl-L-homocysteine + 2 H(+). Dimethylates a single guanine residue at position 26 of a number of tRNAs using S-adenosyl-L-methionine as donor of the methyl groups. This is tRNA (guanine(26)-N(2))-dimethyltransferase from Pyrobaculum arsenaticum (strain DSM 13514 / JCM 11321 / PZ6).